A 2682-amino-acid chain; its full sequence is 3-methylorcinaldehyde synthase (2682 aa).

Residues 111–272 (LIPLVVIEQL…TEITLYGAFH (162 aa)) form an N-terminal acylcarrier protein transacylase domain (SAT) region. C154 serves as the catalytic Nucleophile; for transacylase activity. H272 (proton donor/acceptor; for transacylase activity) is an active-site residue. The region spanning 401 to 826 (ESDIAVIGMA…GSNASMIVMQ (426 aa)) is the Ketosynthase family 3 (KS3) domain. Residues C573, H708, and H749 each act as for beta-ketoacyl synthase activity in the active site. A malonyl-CoA:ACP transacylase (MAT) domain region spans residues 947–1237 (FGGQVSTHIG…ITAMTSRALD (291 aa)). The tract at residues 1339–1468 (LTFVGFQDSS…GKIKFTNARD (130 aa)) is N-terminal hotdog fold. The PKS/mFAS DH domain maps to 1339-1651 (LTFVGFQDSS…YVKIPKLSMQ (313 aa)). The product template (PT) domain stretch occupies residues 1367–1649 (LLLGHMTIQT…IAYVKIPKLS (283 aa)). The active-site Proton acceptor; for dehydratase activity is H1371. Residues 1496 to 1651 (VDEVLANRSI…YVKIPKLSMQ (156 aa)) form a C-terminal hotdog fold region. D1555 acts as the Proton donor; for dehydratase activity in catalysis. The 75-residue stretch at 1723–1797 (ENITERVKAV…DLMKVVTGVV (75 aa)) folds into the Carrier domain. Position 1757 is an O-(pantetheine 4'-phosphoryl)serine (S1757). A methyltransferase domain region spans residues 2021–2211 (EWPLNQVMYT…AGYGHVYWTE (191 aa)). The segment at 2303-2548 (VTGATGGLGA…LGWTPADAIA (246 aa)) is NADPH-binding (R) domain.

It participates in secondary metabolite biosynthesis; terpenoid biosynthesis. Non-reducing polyketide synthase; part of the gene cluster that mediates the biosynthesis of eupenifeldin, a bistropolone meroterpenoid that acts as an antitumor agent. The first step of eupenifeldin biosynthesis is the biosynthesis of 3-methylorcinaldehyde performed by the non-reducing polyketide synthase eupA. Oxidative dearomatization of 3-methylorcinaldehyde likely catalyzed by the FAD-dependent monooxygenase eupB is followed by oxidative ring expansion by the 2-oxoglutarate-dependent dioxygenase eupC to provide the first tropolone metabolite, tropolone stipitaldehyde. In parallel, generation of sesquiterpene alpha-humulene from farnesylpyrophosphate (FPP) is catalyzed by the terpene cyclase eupE. The cytochrome P450 monooxygenase eupD then hydroxylates humulene to humulenol. The putative Diels-Alderase eupF probably catalyzes the formation of the tropolone-humulene skeleton by linking humulenol and the polyketide moiety. The short-chain dehydrogenase/reductase eupG and the flavin-dependent monooxygenase eupH are also essential for eupenifeldin biosynthesis and are likely the additional decorating enzymes of the tropolone-humulene skeleton to produce final eupenifeldin or derivatives. This chain is 3-methylorcinaldehyde synthase, found in Phoma sp.